The chain runs to 239 residues: Large ribosomal subunit protein uL1 (239 aa).

The protein belongs to the universal ribosomal protein uL1 family. As to quaternary structure, part of the 50S ribosomal subunit.

Its function is as follows. Binds directly to 23S rRNA. The L1 stalk is quite mobile in the ribosome, and is involved in E site tRNA release. Protein L1 is also a translational repressor protein, it controls the translation of the L11 operon by binding to its mRNA. The chain is Large ribosomal subunit protein uL1 from Rickettsia canadensis (strain McKiel).